The chain runs to 445 residues: Chromosomal replication initiator protein DnaA (445 aa).

Positions 1–73 (MSTHLTETWE…VNALKLLTSK (73 aa)) are domain I, interacts with DnaA modulators. Residues 73 to 106 (KKYNIDFIVTTEEKIEKNHNNEKSNIVVNDEMST) form a domain II region. Residues 107–323 (MLNPKYTFDS…GALIRIVAFS (217 aa)) form a domain III, AAA+ region region. Residues glycine 151, glycine 153, lysine 154, and threonine 155 each coordinate ATP. The interval 324–445 (SLTNKEISVD…KELNKRINQK (122 aa)) is domain IV, binds dsDNA.

Belongs to the DnaA family. Oligomerizes as a right-handed, spiral filament on DNA at oriC.

It localises to the cytoplasm. Its function is as follows. Plays an essential role in the initiation and regulation of chromosomal replication. ATP-DnaA binds to the origin of replication (oriC) to initiate formation of the DNA replication initiation complex once per cell cycle. Binds the DnaA box (a 9 base pair repeat at the origin) and separates the double-stranded (ds)DNA. Forms a right-handed helical filament on oriC DNA; dsDNA binds to the exterior of the filament while single-stranded (ss)DNA is stabiized in the filament's interior. The ATP-DnaA-oriC complex binds and stabilizes one strand of the AT-rich DNA unwinding element (DUE), permitting loading of DNA polymerase. After initiation quickly degrades to an ADP-DnaA complex that is not apt for DNA replication. Binds acidic phospholipids. The chain is Chromosomal replication initiator protein DnaA from Clostridium botulinum (strain Okra / Type B1).